Reading from the N-terminus, the 153-residue chain is Ribosomal RNA large subunit methyltransferase H (153 aa).

S-adenosyl-L-methionine-binding positions include leucine 70, glycine 102, and 121 to 126 (LSRMTF).

This sequence belongs to the RNA methyltransferase RlmH family. In terms of assembly, homodimer.

The protein localises to the cytoplasm. It catalyses the reaction pseudouridine(1915) in 23S rRNA + S-adenosyl-L-methionine = N(3)-methylpseudouridine(1915) in 23S rRNA + S-adenosyl-L-homocysteine + H(+). Its function is as follows. Specifically methylates the pseudouridine at position 1915 (m3Psi1915) in 23S rRNA. The chain is Ribosomal RNA large subunit methyltransferase H from Geotalea daltonii (strain DSM 22248 / JCM 15807 / FRC-32) (Geobacter daltonii).